The chain runs to 498 residues: WD repeat-containing protein 55 homolog (498 aa).

Positions 1-131 are disordered; the sequence is MHTHNNFKTP…ATFDLDEDDE (131 aa). Composition is skewed to acidic residues over residues 12–23 and 31–48; these read DEDELDDLDEDM and IEQEVLNESDSDNDEYDL. WD repeat units follow at residues 154–193, 198–237, 241–279, 282–321, 324–363, and 408–447; these read KLEDFITDICFHPDRDIIALATIIGDVHLYEYDNEANKLL, VHSKACRDVEFTEDGRFLLTCSKDKCVMVTDMETEKLKKL, AHDDAINTLHVLNENLFASGDDAGTVKLWDLRTKNAIFE, ELEDQITQLTTNEQSKLLLATSADGYLTTFNISARKMYVQ, PYEEELNCMGVYRGDSKLVVGTSKGRLYTYNWGQFGYHCD, and QHNMPIESLDVNASGELIASSSHNNDVRFWNVKYFEDFGE.

This sequence belongs to the WD repeat WDR55 family.

This is WD repeat-containing protein 55 homolog from Drosophila simulans (Fruit fly).